The chain runs to 928 residues: Dual serine/threonine and tyrosine protein kinase (928 aa).

The span at 1 to 14 (MEGDGVPWGSEPES) shows a compositional bias: low complexity. 2 disordered regions span residues 1-22 (MEGDGVPWGSEPESGPGPGGGG) and 55-81 (LRGSQPRGCPSSPAEGGEAGRGPAGDV). A coiled-coil region spans residues 394 to 430 (RKKENELYESLMNIANRKQEEMKDMIVETLNTMKEEL). The Protein kinase domain occupies 651-905 (PKLGQELGRG…PLLGIVQPML (255 aa)). ATP is bound by residues 657–665 (LGRGQYGVV) and K680. The Proton acceptor role is filled by D776.

Belongs to the protein kinase superfamily. Ser/Thr protein kinase family.

It is found in the cytoplasm. The protein localises to the cell membrane. Its subcellular location is the apical cell membrane. It localises to the basolateral cell membrane. The protein resides in the cell junction. The enzyme catalyses L-seryl-[protein] + ATP = O-phospho-L-seryl-[protein] + ADP + H(+). It catalyses the reaction L-threonyl-[protein] + ATP = O-phospho-L-threonyl-[protein] + ADP + H(+). It carries out the reaction L-tyrosyl-[protein] + ATP = O-phospho-L-tyrosyl-[protein] + ADP + H(+). Functionally, acts as a positive regulator of ERK phosphorylation downstream of fibroblast growth factor-receptor activation. Involved in the regulation of both caspase-dependent apoptosis and caspase-independent cell death. In the skin, it plays a predominant role in suppressing caspase-dependent apoptosis in response to UV stress in a range of dermal cell types. This chain is Dual serine/threonine and tyrosine protein kinase (DSTYK), found in Bos taurus (Bovine).